The chain runs to 1091 residues: MADNKGGGGGGGETEGDASSNNNNNSNGAGETGSPGETESQAVEEPESAEKAPVAAVPTDTPAEENPAPSSSSVASSSATPASSSSSPLVVNLLDTCAVCKLSLQSRDTEPKLLPCLHSFCRRCLPEPERQLSVPGGTNGDIQQVGVIRCLVCRQECRQIDLVDNYFVKDASEAPNTDEKSEQVCTSCEDNASAVGFCVECGEWLCKTCIEAHQRVKFTKDHIITNKEDVSSESVGASGQRPVFCPVHKQEQLKLFCETCDRLTCRDCQLLEHKEHRYQFLEEAFQNQKGAIENLLAKLLEKKNYVHFAATQVQNRIKEVNETNKRVEQEIKVAIFTLINEINKKGKSLLQQLESVTKERQIKLVQQQNDITGLSRQIKHVMTFTNWAIASGSSTALLYSKRLITFQLRHILKARCDPVPAANGAIRFHCDPTFWAKNVVNLGNLVIENKPTTGFTPNVVVGQVPQGANHVNKPPAQINLAQLRLQHMQQQVYAQKQQQLQMRMAQPPGQHQRPSAPQVMHQQPPRLISMQSMPRNNMNCGPFQAHQMRMAQNAAQNAARMSGVPRHNGMQYSMMQPHLQRQHSNPGHAGPFPVVSVHNNTINPTSPTTATMANANRGPTSPSVTSIELIPSVTNPENLPSLPDIPPIQLEDAGSSNLDNLLSRYISLGHQLPQPTSNMNPSPAPSAMSPGSTGLSNSHTPVRPPSTSSTGSRGSCGSSSRTVERNSSFKSDPVKVKQEPGTEEEVCSFSGPVKQEKAEDGRRSACMLSSPESSLTPPLTTNVHLETDLESLAALENNVKTEPNNTSQSCRQSSHVSLVNGKSAVRNSMHRPPRGGGGGDGSNKDDDPNEDWCAVCQNGGDLLCCEKCPKVFHLTCHVPTLLSFPSGEWICTFCRDLNKPEVEYDCDNSQHSKKGKTVQGLSPVDQMKCERLLLYLYCHELSIEFQEPVPATIPNYYKIIKKPMDLSTVKKKLQKKHSQHYQTPEDFVADVRLIFKNCERFNEMMKVVQAYADTQEINLQNDSEVAQAGKAVVLYFEEKLPAIYPDRTFQPLPEFEAEDDDGDVTDDSDDDDFVQPRRKRLKSEERPVHIK.

The span at 1–13 shows a compositional bias: gly residues; sequence MADNKGGGGGGGE. Residues 1-87 are disordered; the sequence is MADNKGGGGG…SATPASSSSS (87 aa). Positions 52–87 are enriched in low complexity; that stretch reads APVAAVPTDTPAEENPAPSSSSVASSSATPASSSSS. The RING-type 1 zinc finger occupies 97-154; the sequence is CAVCKLSLQSRDTEPKLLPCLHSFCRRCLPEPERQLSVPGGTNGDIQQVGVIRCLVCR. A B box-type 1; atypical zinc finger spans residues 180-227; that stretch reads KSEQVCTSCEDNASAVGFCVECGEWLCKTCIEAHQRVKFTKDHIITNK. Residues cysteine 185, cysteine 188, cysteine 209, histidine 213, cysteine 245, histidine 248, cysteine 268, and histidine 273 each coordinate Zn(2+). A B box-type 2 zinc finger spans residues 240–281; sequence QRPVFCPVHKQEQLKLFCETCDRLTCRDCQLLEHKEHRYQFL. Positions 269–361 form a coiled coil; it reads QLLEHKEHRY…QLESVTKERQ (93 aa). Disordered stretches follow at residues 672-779 and 821-844; these read LPQP…TPPL and GKSA…GSNK. Low complexity predominate over residues 675 to 721; sequence PTSNMNPSPAPSAMSPGSTGLSNSHTPVRPPSTSSTGSRGSCGSSSR. Over residues 754 to 763 the composition is skewed to basic and acidic residues; that stretch reads KQEKAEDGRR. Low complexity predominate over residues 768–779; sequence LSSPESSLTPPL. The PHD-type zinc finger occupies 850 to 897; that stretch reads EDWCAVCQNGGDLLCCEKCPKVFHLTCHVPTLLSFPSGEWICTFCRDL. The 124-residue stretch at 920-1043 folds into the Bromo domain; the sequence is GLSPVDQMKC…LYFEEKLPAI (124 aa). The disordered stretch occupies residues 1051 to 1091; that stretch reads PLPEFEAEDDDGDVTDDSDDDDFVQPRRKRLKSEERPVHIK. Over residues 1055–1073 the composition is skewed to acidic residues; the sequence is FEAEDDDGDVTDDSDDDDF. A compositionally biased stretch (basic and acidic residues) spans 1082 to 1091; that stretch reads KSEERPVHIK.

In terms of assembly, may interact with smad4.

Its subcellular location is the nucleus. The catalysed reaction is S-ubiquitinyl-[E2 ubiquitin-conjugating enzyme]-L-cysteine + [acceptor protein]-L-lysine = [E2 ubiquitin-conjugating enzyme]-L-cysteine + N(6)-ubiquitinyl-[acceptor protein]-L-lysine.. The protein operates within protein modification; protein ubiquitination. In terms of biological role, acts as an E3 ubiquitin-protein ligase for smad4. Promotes ectoderm embryonic development at the expense of other germ layers. Inhibits mesodermal differentiation. Promotes neural development of the ectoderm. Promotes smad4 alpha degradation via the ubiquitin proteasome pathway. May act as a transcriptional repressor. This Xenopus laevis (African clawed frog) protein is E3 ubiquitin-protein ligase TRIM33 (trim33).